The following is a 458-amino-acid chain: Elongation factor 1-alpha 1 (458 aa).

The residue at position 2 (Gly-2) is a N,N,N-trimethylglycine. Lys-3 is modified (N6,N6-dimethyllysine; alternate). Lys-3 carries the post-translational modification N6-methyllysine; alternate. A tr-type G domain is found at 5 to 240 (KTHVNVVVIG…DAIEPPTRPT (236 aa)). Positions 14–21 (GHVDSGKS) are G1. Residue 14–21 (GHVDSGKS) participates in GTP binding. Lys-30 carries the N6-methyllysine modification. A G2 region spans residues 70-74 (GITID). Residue Lys-79 is modified to N6,N6,N6-trimethyllysine. The tract at residues 91-94 (DAPG) is G3. Residues 91 to 95 (DAPGH) and 153 to 156 (NKMD) contribute to the GTP site. The G4 stretch occupies residues 153 to 156 (NKMD). The segment at 192–194 (SGW) is G5. N6,N6-dimethyllysine; alternate is present on Lys-316. Position 316 is an N6-methyllysine; alternate (Lys-316). Lys-390 bears the N6-methyllysine mark.

This sequence belongs to the TRAFAC class translation factor GTPase superfamily. Classic translation factor GTPase family. EF-Tu/EF-1A subfamily.

It localises to the cytoplasm. This protein promotes the GTP-dependent binding of aminoacyl-tRNA to the A-site of ribosomes during protein biosynthesis. The polypeptide is Elongation factor 1-alpha 1 (TEF1) (Candida albicans (strain SC5314 / ATCC MYA-2876) (Yeast)).